A 383-amino-acid chain; its full sequence is Probable L-aspartate decarboxylase (383 aa).

An N6-(pyridoxal phosphate)lysine modification is found at Lys-231.

Belongs to the group II decarboxylase family. MfnA subfamily. Requires pyridoxal 5'-phosphate as cofactor.

It catalyses the reaction L-aspartate + H(+) = beta-alanine + CO2. It participates in cofactor biosynthesis; coenzyme A biosynthesis. Functionally, catalyzes the decarboxylation of L-aspartate to produce beta-alanine. The chain is Probable L-aspartate decarboxylase from Thermococcus gammatolerans (strain DSM 15229 / JCM 11827 / EJ3).